We begin with the raw amino-acid sequence, 245 residues long: Ribonuclease 3 (245 aa).

One can recognise an RNase III domain in the interval 19 to 148 (FKVFQEKIGI…FIGALYLDQG (130 aa)). Position 61 (glutamate 61) interacts with Mg(2+). Residue aspartate 65 is part of the active site. Residues aspartate 134 and glutamate 137 each contribute to the Mg(2+) site. The active site involves glutamate 137. The region spanning 174–243 (DYKSQLQELI…AAEALKKLKE (70 aa)) is the DRBM domain.

This sequence belongs to the ribonuclease III family. Homodimer. The cofactor is Mg(2+).

It localises to the cytoplasm. The enzyme catalyses Endonucleolytic cleavage to 5'-phosphomonoester.. In terms of biological role, digests double-stranded RNA. Involved in the processing of primary rRNA transcript to yield the immediate precursors to the large and small rRNAs (23S and 16S). Processes some mRNAs, and tRNAs when they are encoded in the rRNA operon. Processes pre-crRNA and tracrRNA of type II CRISPR loci if present in the organism. The polypeptide is Ribonuclease 3 (Bacillus cereus (strain AH187)).